Consider the following 671-residue polypeptide: UvrABC system protein B (671 aa).

One can recognise a Helicase ATP-binding domain in the interval 25–412 (EGIDAGLAHQ…AGRIVEQVVR (388 aa)). 38-45 (GVTGSGKT) lines the ATP pocket. The Beta-hairpin motif lies at 91-114 (YYDYYQPEAYVPSSDTFIEKDASI). In terms of domain architecture, Helicase C-terminal spans 429–582 (QVDDLLSEIH…QIAFNLEHGI (154 aa)). The tract at residues 601–625 (PGSRSKKRKGMAKAAEESARYENEL) is disordered. Residues 614–625 (AAEESARYENEL) are compositionally biased toward basic and acidic residues. A UVR domain is found at 632–667 (NKRIRQLEEKMYQLARDLEFEAAAQMRDEIGKLRER).

This sequence belongs to the UvrB family. In terms of assembly, forms a heterotetramer with UvrA during the search for lesions. Interacts with UvrC in an incision complex.

It localises to the cytoplasm. Functionally, the UvrABC repair system catalyzes the recognition and processing of DNA lesions. A damage recognition complex composed of 2 UvrA and 2 UvrB subunits scans DNA for abnormalities. Upon binding of the UvrA(2)B(2) complex to a putative damaged site, the DNA wraps around one UvrB monomer. DNA wrap is dependent on ATP binding by UvrB and probably causes local melting of the DNA helix, facilitating insertion of UvrB beta-hairpin between the DNA strands. Then UvrB probes one DNA strand for the presence of a lesion. If a lesion is found the UvrA subunits dissociate and the UvrB-DNA preincision complex is formed. This complex is subsequently bound by UvrC and the second UvrB is released. If no lesion is found, the DNA wraps around the other UvrB subunit that will check the other stand for damage. This is UvrABC system protein B from Pseudomonas syringae pv. tomato (strain ATCC BAA-871 / DC3000).